Reading from the N-terminus, the 173-residue chain is Photosystem I assembly protein Ycf3 (173 aa).

3 TPR repeats span residues 35 to 68, 72 to 105, and 120 to 153; these read AYVY…EESP, SETL…NSNQ, and GRTA…YPGG.

Belongs to the Ycf3 family.

It is found in the cellular thylakoid membrane. Functionally, essential for the assembly of the photosystem I (PSI) complex. May act as a chaperone-like factor to guide the assembly of the PSI subunits. This chain is Photosystem I assembly protein Ycf3, found in Prochlorococcus marinus (strain MIT 9313).